The primary structure comprises 729 residues: NAD(P)H-quinone oxidoreductase subunit 5, chloroplastic (729 aa).

Helical transmembrane passes span 9–29, 39–59, 87–107, 125–145, 147–167, 184–204, 218–238, 258–278, 289–311, 327–347, 354–374, 395–415, 425–445, 540–560, 592–612, 627–646, 676–696, and 708–728; these read WIIP…SFFF, LCAL…LAIF, FLVD…GVLV, YAYL…PNLI, LYVF…FWFA, IGDF…GSFE, IGFS…AGPV, TPIS…FFIA, LVMQ…LALA, LGYM…FHLV, ALLF…VGYS, GTTF…ACFW, WLSS…TAFY, FSLV…INLI, ILLN…FSFI, LVGF…SWSL, YGID…GEFI, and LFII…FLPF.

It belongs to the complex I subunit 5 family. NDH is composed of at least 16 different subunits, 5 of which are encoded in the nucleus.

The protein localises to the plastid. It is found in the chloroplast thylakoid membrane. The enzyme catalyses a plastoquinone + NADH + (n+1) H(+)(in) = a plastoquinol + NAD(+) + n H(+)(out). It catalyses the reaction a plastoquinone + NADPH + (n+1) H(+)(in) = a plastoquinol + NADP(+) + n H(+)(out). Functionally, NDH shuttles electrons from NAD(P)H:plastoquinone, via FMN and iron-sulfur (Fe-S) centers, to quinones in the photosynthetic chain and possibly in a chloroplast respiratory chain. The immediate electron acceptor for the enzyme in this species is believed to be plastoquinone. Couples the redox reaction to proton translocation, and thus conserves the redox energy in a proton gradient. The polypeptide is NAD(P)H-quinone oxidoreductase subunit 5, chloroplastic (ndhF) (Adiantum capillus-veneris (Maidenhair fern)).